We begin with the raw amino-acid sequence, 436 residues long: C4-dicarboxylate transport protein 2 (436 aa).

9 consecutive transmembrane segments (helical) span residues 14–34 (VLVA…TAVA), 45–65 (LIKM…IAGM), 77–97 (MALL…LVVV), 142–162 (VVGA…VLFG), 198–218 (PIGA…GSLV), 223–243 (LMLC…GGIA), 290–310 (VVGL…SIYL), 331–351 (ITLL…TGSG), and 353–373 (IVLA…LALI). The interval 414-436 (ELAGEGNASSPASDIPVGGREAV) is disordered.

This sequence belongs to the dicarboxylate/amino acid:cation symporter (DAACS) (TC 2.A.23) family.

It is found in the cell inner membrane. Responsible for the transport of dicarboxylates such as succinate, fumarate, and malate from the periplasm across the membrane. The protein is C4-dicarboxylate transport protein 2 of Pseudomonas paraeruginosa (strain DSM 24068 / PA7) (Pseudomonas aeruginosa (strain PA7)).